We begin with the raw amino-acid sequence, 994 residues long: Chromatin modification-related protein vid21 (994 aa).

Disordered stretches follow at residues proline 122–valine 275 and proline 288–valine 308. Basic and acidic residues-rich tracts occupy residues threonine 158–isoleucine 171, lysine 178–glycine 191, leucine 204–glutamate 233, valine 254–serine 265, and proline 288–glutamate 305. Phosphoserine occurs at positions 298 and 378. Residues proline 475 to glutamate 548 form the HSA domain. The interval serine 671–asparagine 693 is disordered. A compositionally biased stretch (basic and acidic residues) spans phenylalanine 672 to asparagine 693. In terms of domain architecture, Myb-like spans lysine 713–aspartate 773. Disordered regions lie at residues threonine 857–leucine 880 and glutamate 975–glutamine 994. Residues leucine 880–leucine 912 adopt a coiled-coil conformation.

This sequence belongs to the EAF1 family. In terms of assembly, component of the NuA4 histone acetyltransferase complex.

It localises to the nucleus. Component of the NuA4 histone acetyltransferase complex which is involved in transcriptional activation of selected genes principally by acetylation of nucleosomal histone H4 and H2A. The NuA4 complex is also involved in DNA repair. The protein is Chromatin modification-related protein vid21 (vid21) of Schizosaccharomyces pombe (strain 972 / ATCC 24843) (Fission yeast).